Reading from the N-terminus, the 300-residue chain is Hairy/enhancer-of-split related with YRPW motif protein 1 (300 aa).

Residues 1-52 (MKRGHDYSSSDSELDENIEVEKESADENGNLSSAAGSMSPSTSSQILARKRR) are disordered. The span at 32-44 (SSAAGSMSPSTSS) shows a compositional bias: low complexity. Residues 48-103 (ARKRRRGIIEKRRRDRINNSLSELRRLVPSAFEKQGSAKLEKAEILQMTVDHLKML) form the bHLH domain. Positions 121–157 (YRSLGFRECLAEVARYLSIIEGMDTTDPLRVRLVSHL) constitute an Orange domain. Residues 199 to 210 (AHTSANSTSSST) show a composition bias toward low complexity. 2 disordered regions span residues 199-232 (AHTSANSTSSSTEAHHQNRLPGSPHAETSSLRVP) and 278-300 (LSPTTPTPSGKPYRPWGTEIGAF). The short motif at 290-293 (YRPW) is the YRPW motif element.

It belongs to the HEY family. In terms of assembly, efficient DNA binding requires dimerization with another bHLH protein. Binds DNA in the form of homodimer or more strongly as a heterodimer with hes1/hairy1 or hes4/hairy2b. Also weakly interacts with the bHLH proteins hes2, neurod1 and neurod4/ath3. Interacts (via Orange domain) with ccdc89/boip (via C-terminus).

Its subcellular location is the nucleus. Downstream effector of Notch signaling. Transcriptional repressor which binds preferentially to the canonical E box sequence 5'-CACGTG-3'. Acts as a suppressor of neurogenesis by antagonizing proneural gene function. Functions during floorplate development. Plays a role in pronephros formation in the inhibition of distal tubule and duct cell fates and the promotion of glomus and proximal tubule formation. The protein is Hairy/enhancer-of-split related with YRPW motif protein 1 (hey1) of Xenopus tropicalis (Western clawed frog).